Here is a 94-residue protein sequence, read N- to C-terminus: MSLADFMEQRVQVITNDGRVVLGSLKGFDHTTNLILSDSFERIISMDQDMETIPLGVYLLRGENVAMVGLVNEELDSEIEWTKIRGEAIPDVVH.

The region spanning 1-74 is the Sm domain; sequence MSLADFMEQR…VAMVGLVNEE (74 aa).

It belongs to the snRNP Sm proteins family. As to quaternary structure, component of the heptameric LSM2-LSM8 complex that forms a seven-membered ring structure with a donut shape. The LSm subunits are arranged in the order lsm8, lsm2, lsm3, lsm6, lsm5, lsm7 and lsm4.

Its subcellular location is the nucleus. It localises to the cytoplasm. Functionally, component of the nuclear LSM2-LSM8 complex, which is involved in spliceosome assembly. The LSM2-LSM8 complex plays a role in the biogenesis of the spliceosomal U4/U6-U5 tri-snRNP complex by accelerating prp24-mediated annealing of U4/U6 di-snRNA. The LSM2-LSM8 complex binds U6 snRNA terminating with a cyclic 2',3' phosphate group; RNA with an unmodified 3' hydroxyl or non-cyclic 3' phosphate is bound less tightly. The polypeptide is LSM2-LSM8 complex subunit lsm8 (lsm8) (Schizosaccharomyces pombe (strain 972 / ATCC 24843) (Fission yeast)).